A 185-amino-acid chain; its full sequence is Ribosome-recycling factor (185 aa).

This sequence belongs to the RRF family.

Its subcellular location is the cytoplasm. Functionally, responsible for the release of ribosomes from messenger RNA at the termination of protein biosynthesis. May increase the efficiency of translation by recycling ribosomes from one round of translation to another. The sequence is that of Ribosome-recycling factor from Geobacter sulfurreducens (strain ATCC 51573 / DSM 12127 / PCA).